The sequence spans 194 residues: PLASMODESMATA CALLOSE-BINDING PROTEIN 2 (194 aa).

Positions 1–16 (MAPLVLYLLTLLMAGH) are cleaved as a signal peptide. An intrachain disulfide couples C22 to C84. N85 carries N-linked (GlcNAc...) asparagine glycosylation. Residues 106-116 (SSASGSSGSGS) show a composition bias toward low complexity. Residues 106–140 (SSASGSSGSGSTTVTPGKNSPKGSNSITTFPGGNS) form a disordered region. The span at 117 to 140 (TTVTPGKNSPKGSNSITTFPGGNS) shows a compositional bias: polar residues. A glycan (N-linked (GlcNAc...) asparagine) is linked at N154. The GPI-anchor amidated serine moiety is linked to residue S171. Residues 172–194 (SGFALYYSNNLLLTGFCSLVMML) constitute a propeptide, removed in mature form.

Post-translationally, contains two additional disulfide bonds. Expressed in the shoot apical region and in young leaves but also detected in the laminar and vasculature of mature leaves.

The protein resides in the cell membrane. The protein localises to the cell junction. It is found in the plasmodesma. In terms of biological role, able to bind (1-&gt;3)-beta-D-glucans (laminarin). In Arabidopsis thaliana (Mouse-ear cress), this protein is PLASMODESMATA CALLOSE-BINDING PROTEIN 2 (PDCB2).